A 476-amino-acid polypeptide reads, in one-letter code: Cysteine--tRNA ligase (476 aa).

Residue cysteine 29 participates in Zn(2+) binding. Positions 31–41 (PTVYDYPHLGH) match the 'HIGH' region motif. Zn(2+) contacts are provided by cysteine 209, histidine 234, and glutamate 238. The short motif at 266 to 270 (KMSKS) is the 'KMSKS' region element. Position 269 (lysine 269) interacts with ATP.

It belongs to the class-I aminoacyl-tRNA synthetase family. It depends on Zn(2+) as a cofactor.

It is found in the cytoplasm. The enzyme catalyses tRNA(Cys) + L-cysteine + ATP = L-cysteinyl-tRNA(Cys) + AMP + diphosphate. This is Cysteine--tRNA ligase from Thermococcus gammatolerans (strain DSM 15229 / JCM 11827 / EJ3).